Consider the following 409-residue polypeptide: Putative actin-fragmin kinase DDB_G0268812 (409 aa).

The tract at residues 1-45 (MKTFRDFKKKIKNNNNNKNNKNNNINNNNSNNNKNNKNNNNNNSN) is disordered. Residues 5-46 (RDFKKKIKNNNNNKNNKNNNINNNNSNNNKNNKNNNNNNSNN) adopt a coiled-coil conformation. Positions 13–45 (NNNNNKNNKNNNINNNNSNNNKNNKNNNNNNSN) are enriched in low complexity.

It belongs to the protein kinase superfamily. AFK Ser/Thr protein kinase family.

This chain is Putative actin-fragmin kinase DDB_G0268812, found in Dictyostelium discoideum (Social amoeba).